An 88-amino-acid chain; its full sequence is Acyl-CoA-binding domain-containing protein 7 (88 aa).

Positions Leu-3 to Ile-88 constitute an ACB domain. An acyl-CoA contacts are provided by residues Arg-15, Tyr-30–Lys-34, Lys-56, and Tyr-75.

It belongs to the ACBD7 family.

In terms of biological role, binds medium- and long-chain acyl-CoA esters. The chain is Acyl-CoA-binding domain-containing protein 7 (ACBD7) from Bos taurus (Bovine).